A 688-amino-acid polypeptide reads, in one-letter code: MAKIRVYELAKELNISSKELITLLEEEFSVEVKNHMSAIEDEDANLIKELLSGKEKSEKTKEEDDEIETTAKNPIKESMNNKKSNKRDDKNEKVNTENAEDMGIITMTSDTITVKEISDKLEKSYAEVIKELMLMGVMASVNQEINFEMAEKLAAKFDMEILKEDEDEKEDLEDILKDNEEEEYLQKRSPIITVMGHVDHGKTSLLDAIRKSKVTSTEAGGITQHIGAYTVELNGEAITFLDTPGHAAFTAMRARGAQVTDIVILVVAADDGIMPQTQEAISHCKAANVPLIVAINKIDRPGANIDKVKQELTEYGLVAEDWGGDTICVPVSAHTKEGIDDLLEMILLSSEILELKANPNRKAKGTVVEAKLDKGRGPVATLLIQNGTLRVGDSIVVGSTYGRIRAMFNDKGRNIESAGPSTPVEILGLSEVPEAGDKFYQVKEEKTARGIADKRKEKIRDEYLQSTHKVSLEDLYNQIQEGTVKELGLIVKADVQGSVEALKQSLEKLSTEEVKVRVIHGGVGAINETDVTLATASNGIILGFNVRPDNNAIIASERDGVDIKTYRVIYDAIEDIKSAMLGMLEPEFKEVVIGTAEVRQVYKISSVGTIAGAYIQTGKLARNAGARVIRDGIVIFESELASLKRFKDDAKEVAQGYECGLSIEKFNDIKEGDIIECFIMEEIKKKTL.

Basic and acidic residues-rich tracts occupy residues 53–62 (GKEKSEKTKE) and 86–95 (KRDDKNEKVN). The segment at 53–100 (GKEKSEKTKEEDDEIETTAKNPIKESMNNKKSNKRDDKNEKVNTENAE) is disordered. The region spanning 187–354 (KRSPIITVMG…MILLSSEILE (168 aa)) is the tr-type G domain. A G1 region spans residues 196 to 203 (GHVDHGKT). 196–203 (GHVDHGKT) is a binding site for GTP. The segment at 221–225 (GITQH) is G2. Residues 242–245 (DTPG) are G3. GTP is bound by residues 242–246 (DTPGH) and 296–299 (NKID). The G4 stretch occupies residues 296 to 299 (NKID). The G5 stretch occupies residues 332-334 (SAH).

It belongs to the TRAFAC class translation factor GTPase superfamily. Classic translation factor GTPase family. IF-2 subfamily.

The protein localises to the cytoplasm. One of the essential components for the initiation of protein synthesis. Protects formylmethionyl-tRNA from spontaneous hydrolysis and promotes its binding to the 30S ribosomal subunits. Also involved in the hydrolysis of GTP during the formation of the 70S ribosomal complex. The protein is Translation initiation factor IF-2 of Clostridium botulinum (strain ATCC 19397 / Type A).